The chain runs to 246 residues: MADS-box protein EJ2 (246 aa).

Residues 1–61 (MGRGRVELKR…GKLYEFCSTS (61 aa)) form the MADS-box domain. Positions 87–177 (TQNNYHEYLR…RRKLEESVAG (91 aa)) constitute a K-box domain.

The protein localises to the nucleus. Its function is as follows. MADS-box transcription factor that acts redundantly with J2 to control meristem maturation and inflorescence architecture. This Solanum lycopersicum (Tomato) protein is MADS-box protein EJ2.